We begin with the raw amino-acid sequence, 306 residues long: D-alanine--D-alanine ligase (306 aa).

Catalysis depends on residues glutamate 15 and serine 150. Positions 101-303 constitute an ATP-grasp domain; sequence KLLWKSLSLR…FDELILKILK (203 aa). Position 134–189 (134–189) interacts with ATP; it reads ILKLKFPVVIKPNNAGSSIGITIVNHPDLLIDSINLAFNYSNNIIIEKFLKGTEYT. Residues aspartate 257, glutamate 270, and asparagine 272 each coordinate Mg(2+). Residue serine 281 is part of the active site.

The protein belongs to the D-alanine--D-alanine ligase family. Mg(2+) serves as cofactor. The cofactor is Mn(2+).

The protein localises to the cytoplasm. It carries out the reaction 2 D-alanine + ATP = D-alanyl-D-alanine + ADP + phosphate + H(+). It functions in the pathway cell wall biogenesis; peptidoglycan biosynthesis. Its function is as follows. Cell wall formation. The sequence is that of D-alanine--D-alanine ligase from Buchnera aphidicola subsp. Schizaphis graminum (strain Sg).